Reading from the N-terminus, the 786-residue chain is Probable glutamine--tRNA ligase (786 aa).

Residues 181 to 198 (DLAPKKKEKKPEGPKPSK) show a composition bias toward basic and acidic residues. The interval 181–218 (DLAPKKKEKKPEGPKPSKDAAAAATAPGTKNQKEASPE) is disordered. A 'HIGH' region motif is present at residues 276–286 (PEPNGVLHIGH). ATP-binding positions include 277–279 (EPN) and 283–289 (HIGHAKA). Positions 309 and 444 each coordinate L-glutamine. ATP contacts are provided by residues threonine 463, 492-493 (RL), and 500-502 (VSK). A 'KMSKS' region motif is present at residues 499–503 (VVSKR).

Belongs to the class-I aminoacyl-tRNA synthetase family.

It catalyses the reaction tRNA(Gln) + L-glutamine + ATP = L-glutaminyl-tRNA(Gln) + AMP + diphosphate. In Caenorhabditis elegans, this protein is Probable glutamine--tRNA ligase.